The sequence spans 387 residues: Phosphoglycerate kinase (387 aa).

Residues 21-23, arginine 36, and 59-62 contribute to the substrate site; these read DLN and HLGR. Lysine 84 carries the post-translational modification N6-acetyllysine. Residues arginine 113 and arginine 146 each coordinate substrate. ATP-binding positions include lysine 197, glutamate 314, and 340-343; that span reads GGDT.

This sequence belongs to the phosphoglycerate kinase family. Monomer.

Its subcellular location is the cytoplasm. It catalyses the reaction (2R)-3-phosphoglycerate + ATP = (2R)-3-phospho-glyceroyl phosphate + ADP. The protein operates within carbohydrate degradation; glycolysis; pyruvate from D-glyceraldehyde 3-phosphate: step 2/5. In Shigella sonnei (strain Ss046), this protein is Phosphoglycerate kinase.